Consider the following 164-residue polypeptide: Cyclic pyranopterin monophosphate synthase (164 aa).

Substrate-binding positions include leucine 77 to histidine 79 and methionine 115 to glutamate 116. Aspartate 130 is an active-site residue.

This sequence belongs to the MoaC family. As to quaternary structure, homohexamer; trimer of dimers.

It catalyses the reaction (8S)-3',8-cyclo-7,8-dihydroguanosine 5'-triphosphate = cyclic pyranopterin phosphate + diphosphate. It functions in the pathway cofactor biosynthesis; molybdopterin biosynthesis. Its function is as follows. Catalyzes the conversion of (8S)-3',8-cyclo-7,8-dihydroguanosine 5'-triphosphate to cyclic pyranopterin monophosphate (cPMP). The chain is Cyclic pyranopterin monophosphate synthase from Sinorhizobium medicae (strain WSM419) (Ensifer medicae).